We begin with the raw amino-acid sequence, 306 residues long: Putative B3 domain-containing protein Os03g0621600 (306 aa).

The segment at residues 29–122 (FSVLCLMPIM…QLKTLIFDSS (94 aa)) is a DNA-binding region (TF-B3 1). The disordered stretch occupies residues 139 to 166 (YDIAMRNSQDEKKKRKQRDISRQGTVKP). The segment at residues 210–306 (GYVMNNSSIH…VMDVHIIRRK (97 aa)) is a DNA-binding region (TF-B3 2).

Its subcellular location is the nucleus. The sequence is that of Putative B3 domain-containing protein Os03g0621600 from Oryza sativa subsp. japonica (Rice).